Reading from the N-terminus, the 750-residue chain is Glutamate carboxypeptidase 2 (750 aa).

Residues 1 to 19 are Cytoplasmic-facing; sequence MWNLLHETDSAVATARRPR. Position 10 is a phosphoserine (serine 10). Residues 20-43 traverse the membrane as a helical; Signal-anchor for type II membrane protein segment; it reads WLCAGALVLAGGFFLLGFLFGWFI. The Extracellular segment spans residues 44 to 750; sequence KSSNEATNIT…AAAETLSEVA (707 aa). Residues asparagine 51, asparagine 76, asparagine 121, asparagine 140, asparagine 153, and asparagine 195 are each glycosylated (N-linked (GlcNAc...) asparagine). The substrate site is built by arginine 210 and asparagine 257. The Ca(2+) site is built by threonine 269 and tyrosine 272. Residues 274 to 587 form an NAALADase region; the sequence is ANEYAYRRGI…QVRGGMVFEL (314 aa). A glycan (N-linked (GlcNAc...) asparagine) is linked at asparagine 336. 2 residues coordinate Zn(2+): histidine 377 and aspartate 387. Glutamate 424 is a binding site for substrate. Catalysis depends on glutamate 424, which acts as the Nucleophile; for NAALADase activity. Glutamate 425 is a binding site for Zn(2+). Residues glutamate 433 and glutamate 436 each coordinate Ca(2+). Aspartate 453 is a Zn(2+) binding site. 2 N-linked (GlcNAc...) asparagine glycosylation sites follow: asparagine 459 and asparagine 476. Residues 517-518, asparagine 519, 534-536, tyrosine 552, and 552-553 each bind substrate; these read SG, RAR, and YH. Residue histidine 553 coordinates Zn(2+). Serine 628 (charge relay system) is an active-site residue. Residue asparagine 638 is glycosylated (N-linked (GlcNAc...) asparagine). Catalysis depends on charge relay system residues aspartate 666 and histidine 689. 699 to 700 is a substrate binding site; that stretch reads KY.

This sequence belongs to the peptidase M28 family. M28B subfamily. As to quaternary structure, homodimer. The cofactor is Zn(2+). Post-translationally, the first two amino acids at the N-terminus of isoform PSMA' appear to be cleaved by limited proteolysis. In terms of processing, the N-terminus is blocked. Highly expressed in prostate epithelium. Detected in urinary bladder, kidney, testis, ovary, fallopian tube, breast, adrenal gland, liver, esophagus, stomach, small intestine, colon and brain (at protein level). Detected in the small intestine, brain, kidney, liver, spleen, colon, trachea, spinal cord and the capillary endothelium of a variety of tumors. Expressed specifically in jejunum brush border membranes. In the brain, highly expressed in the ventral striatum and brain stem. Also expressed in fetal liver and kidney. Isoform PSMA' is the most abundant form in normal prostate. Isoform PSMA-1 is the most abundant form in primary prostate tumors. Isoform PSMA-9 is specifically expressed in prostate cancer.

It localises to the cell membrane. The protein resides in the cytoplasm. It carries out the reaction Release of an unsubstituted, C-terminal glutamyl residue, typically from Ac-Asp-Glu or folylpoly-gamma-glutamates.. Its activity is regulated as follows. The NAALADase activity is inhibited by beta-NAAG, quisqualic acid, 2-(phosphonomethyl) pentanedioic acid (PMPA) and EDTA. Activated by cobalt. Has both folate hydrolase and N-acetylated-alpha-linked-acidic dipeptidase (NAALADase) activity. Has a preference for tri-alpha-glutamate peptides. In the intestine, required for the uptake of folate. In the brain, modulates excitatory neurotransmission through the hydrolysis of the neuropeptide, N-aceylaspartylglutamate (NAAG), thereby releasing glutamate. Involved in prostate tumor progression. Its function is as follows. Also exhibits a dipeptidyl-peptidase IV type activity. In vitro, cleaves Gly-Pro-AMC. This chain is Glutamate carboxypeptidase 2, found in Homo sapiens (Human).